A 33-amino-acid polypeptide reads, in one-letter code: Thrombin-like enzyme RP34 (33 aa).

The 33-residue stretch at 1–33 (VIGGDEXDINEHRSLALMYXSWSHRFIXXGXLI) folds into the Peptidase S1 domain.

The protein belongs to the peptidase S1 family. Snake venom subfamily. Homodimer. As to expression, expressed by the venom gland.

Its subcellular location is the secreted. The enzyme catalyses Selective cleavage of Arg-|-Xaa bond in fibrinogen, to form fibrin, and release fibrinopeptide A. The specificity of further degradation of fibrinogen varies with species origin of the enzyme.. Thrombin-like snake venom serine protease that displays clotting activity on fibrinogen. Shows both arginine-ester hydrolase and amidase activities on synthetic substrates. Also shows proteolytic activity toward casein. The protein is Thrombin-like enzyme RP34 of Cerastes cerastes (Horned desert viper).